A 412-amino-acid polypeptide reads, in one-letter code: Class E basic helix-loop-helix protein 40 (412 aa).

Residues 1–139 (MERIPSAQPP…LSGRNVETGQ (139 aa)) are essential for interaction with BMAL1, E-box binding and repressor activity against the CLOCK-BMAL1 heterodimer. The bHLH domain maps to 52–107 (TYKLPHRLIEKKRRDRINECIAQLKDLLPEHLKLTTLGHLEKAVVLELTLKHVKAL). Residues 75-79 (LKDLL) are necessary for interaction with RXRA and repressor activity against RXRA. One can recognise an Orange domain in the interval 142–175 (FCSGFQTCAREVLQYLAKHENTRDLKSSQLVTHL). A Glycyl lysine isopeptide (Lys-Gly) (interchain with G-Cter in SUMO1, SUMO2 and SUMO3) cross-link involves residue K159. K167 is covalently cross-linked (Glycyl lysine isopeptide (Lys-Gly) (interchain with G-Cter in SUMO2)). Disordered stretches follow at residues 183–259 (LQGG…SEQL) and 275–309 (IGAI…LISS). S235 is subject to Phosphoserine. Positions 248 to 259 (ESEKGDLRSEQL) are enriched in basic and acidic residues. Residue K279 forms a Glycyl lysine isopeptide (Lys-Gly) (interchain with G-Cter in SUMO1); alternate linkage. K279 is covalently cross-linked (Glycyl lysine isopeptide (Lys-Gly) (interchain with G-Cter in SUMO1, SUMO2 and SUMO3); alternate). K279 participates in a covalent cross-link: Glycyl lysine isopeptide (Lys-Gly) (interchain with G-Cter in SUMO2); alternate. K288 is covalently cross-linked (Glycyl lysine isopeptide (Lys-Gly) (interchain with G-Cter in SUMO2)). S383 is modified (phosphoserine).

As to quaternary structure, homodimer. Heterodimer with BHLHE41/DEC2. Interacts with TCF3/E47. Interacts with ubiquitin-conjugating enzyme UBE2I/UBC9. Interacts with HDAC1, SUMO1, RXRA and BMAL1. Ubiquitinated; which may lead to proteasomal degradation. Post-translationally, sumoylation inhibits its ubiquitination and promotes its negative regulation of the CLOCK-BMAL1 heterodimer transcriptional activator activity.

The protein localises to the cytoplasm. The protein resides in the nucleus. In terms of biological role, transcriptional repressor involved in the regulation of the circadian rhythm by negatively regulating the activity of the clock genes and clock-controlled genes. Acts as the negative limb of a novel autoregulatory feedback loop (DEC loop) which differs from the one formed by the PER and CRY transcriptional repressors (PER/CRY loop). Both these loops are interlocked as it represses the expression of PER1/2 and in turn is repressed by PER1/2 and CRY1/2. Represses the activity of the circadian transcriptional activator: CLOCK-BMAL1|BMAL2 heterodimer by competing for the binding to E-box elements (5'-CACGTG-3') found within the promoters of its target genes. Negatively regulates its own expression and the expression of DBP and BHLHE41/DEC2. Acts as a corepressor of RXR and the RXR-LXR heterodimers and represses the ligand-induced RXRA and NR1H3/LXRA transactivation activity. May be involved in the regulation of chondrocyte differentiation via the cAMP pathway. Represses the transcription of NR0B2 and attentuates the transactivation of NR0B2 by the CLOCK-BMAL1 complex. Drives the circadian rhythm of blood pressure through transcriptional repression of ATP1B1 in the cardiovascular system. The sequence is that of Class E basic helix-loop-helix protein 40 (BHLHE40) from Pongo abelii (Sumatran orangutan).